We begin with the raw amino-acid sequence, 123 residues long: Large ribosomal subunit protein eL8 (123 aa).

Belongs to the eukaryotic ribosomal protein eL8 family. May be present in up to 3 copies per 70S ribosome. Part of the 50S ribosomal subunit, where it binds 23S rRNA at its canonical site near the L1 stalk, as well as a possible second 50S binding site near helix 25 and a possible third site on the beak of the 30S subunit. Component of box C/D small ribonucleoprotein (sRNP) particles that contain rpl7ae, FlpA and nop5, plus a guide RNA. These sRNP particles form homodimers, giving rise to an asymmetric holoenzyme. Probably part of the RNase P complex.

It is found in the cytoplasm. Multifunctional RNA-binding protein that recognizes the K-turn motif in ribosomal RNA, the RNA component of RNase P, box H/ACA, box C/D and box C'/D' sRNAs. Component of the 70S ribosome. Component of a box C/D small ribonucleoprotein (sRNP) particle that is involved in pre-rRNA and tRNA processing. Utilizes the methyl donor S-adenosyl-L-methionine to catalyze the site-specific 2'-hydroxyl methylation of ribose moieties in rRNA and tRNA. Site specificity is provided by a guide RNA that base pairs with the substrate. Methylation occurs at a characteristic distance from the sequence involved in base pairing with the guide RNA. In Pyrococcus furiosus (strain ATCC 43587 / DSM 3638 / JCM 8422 / Vc1), this protein is Large ribosomal subunit protein eL8.